A 298-amino-acid polypeptide reads, in one-letter code: 3'-5' exonuclease crn-4 (298 aa).

The 181-residue stretch at 12–192 (LILDFETTSD…DDCLNIATIL (181 aa)) folds into the Exonuclease domain. Positions 15, 17, and 184 each coordinate Mg(2+). Cys-210, Cys-260, Cys-263, and Cys-270 together coordinate Zn(2+).

In terms of assembly, homodimer (via C-terminus). Interacts with crn-5; interaction promotes the DNase activity of crn-4. Interacts with cps-6, crn-1 and cyn-13. It depends on Mg(2+) as a cofactor.

With respect to regulation, exonuclease activity is inhibited in vitro by pontacyl violet 6R (PV6R), p-chloromercuriphenyl sulfonate (PCMPS), 5,5'-dithiobis(2-nitrobenzoic acid) (DTNB), aurintricarboxylic acid (ATA), 2-morpholin-4-ylethanesulfonate (MES), 4-[(4,6-dichloro-1,3,5-triazin-2-yl)amino]-2-(3-hydroxy-6-oxoxanthen-9-yl)benzoic acid (DR396) and fmoc-d-Cha-OH (FDCO). Interaction with ssRNA is reduced in vitro by PV6R. Possesses 3'-&gt;5' exoribonuclease activity in digestion of DNA and RNA. Cleaves nucleic acid substrates with efficiencies in the following order: single-stranded RNA (ssRNA) &gt; double-stranded DNA (dsDNA) &gt; single-stranded DNA (ssDNA). Involved in apoptotic DNA degradation. The sequence is that of 3'-5' exonuclease crn-4 (crn-4) from Caenorhabditis elegans.